A 304-amino-acid polypeptide reads, in one-letter code: N-acetyl-D-glucosamine kinase (304 aa).

Residues 4-11 and 133-140 each bind ATP; these read GLDIGGTK and GFGGGFVL. Residues histidine 157, cysteine 178, cysteine 180, and cysteine 185 each contribute to the Zn(2+) site.

This sequence belongs to the ROK (NagC/XylR) family. NagK subfamily.

It carries out the reaction N-acetyl-D-glucosamine + ATP = N-acetyl-D-glucosamine 6-phosphate + ADP + H(+). It participates in cell wall biogenesis; peptidoglycan recycling. Catalyzes the phosphorylation of N-acetyl-D-glucosamine (GlcNAc) derived from cell-wall degradation, yielding GlcNAc-6-P. The protein is N-acetyl-D-glucosamine kinase of Haemophilus influenzae (strain 86-028NP).